Consider the following 1434-residue polypeptide: Nitric oxide synthase 1 (1434 aa).

An interaction with NOSIP region spans residues 1-205; that stretch reads MEDHMFGVQQ…LQGRGENNEL (205 aa). The region spanning 17 to 99 is the PDZ domain; sequence SVRLFKRKVG…ETHVVLILRG (83 aa). Disordered regions lie at residues 112-192 and 276-302; these read TGDG…KKAT and NNPY…PSKC. The interaction with DYNLL1/PIN stretch occupies residues 163 to 245; that stretch reads YDDGQEAGSL…MGIQVDRDLD (83 aa). Residues 285–299 show a composition bias toward polar residues; sequence PPTSGKQSPTKNGSP. S339 is a binding site for (6R)-L-erythro-5,6,7,8-tetrahydrobiopterin. C420 lines the heme b pocket. Q483, W592, Y593, and E597 together coordinate L-arginine. Residues V682, W683, and F696 each contribute to the (6R)-L-erythro-5,6,7,8-tetrahydrobiopterin site. Position 711 (Y711) interacts with heme b. Residues 730–750 are calmodulin-binding; that stretch reads KRRAIGFKKLAEAVKFSAKLM. The region spanning 760–940 is the Flavodoxin-like domain; the sequence is ATILYATETG…AFRTWAKKVF (181 aa). FMN is bound by residues T766, E767, T768, K770, S771, S812, T813, and G817. A phosphoserine mark is found at S852, S862, and S863. Residues S891, H896, C898, E924, and Q928 each coordinate FMN. Residues 995 to 1242 enclose the FAD-binding FR-type domain; it reads KRVSAARLLS…VRGAPSFHLP (248 aa). NADP(+) is bound at residue R1015. 7 residues coordinate FAD: H1037, R1178, Y1179, Y1180, S1181, T1196, and A1198. S1201 is a binding site for NADP(+). FAD contacts are provided by Y1202, V1215, C1216, and S1217. Positions 1256, 1289, 1318, 1319, 1325, 1327, 1329, 1362, 1403, and 1405 each coordinate NADP(+).

It belongs to the NOS family. In terms of assembly, homodimer. Interacts with DLG4; the interaction possibly being prevented by the association between NOS1 and CAPON. Forms a ternary complex with CAPON and RASD1. Forms a ternary complex with CAPON and SYN1. Interacts with ZDHHC23. Interacts with NOSIP; which may impair its synaptic location. Interacts with HTR4. Interacts with SLC6A4. Interacts with VAC14. Interacts (via N-terminal domain) with DLG4 (via N-terminal tandem pair of PDZ domains). Interacts with SLC6A4. Forms a complex with ASL, ASS1 and SLC7A1; the complex regulates cell-autonomous L-arginine synthesis and citrulline recycling while channeling extracellular L-arginine to nitric oxide synthesis pathway. Interacts with DMD; localizes NOS1 to sarcolemma in muscle cells. Interacts with DYNLL1; inhibits the nitric oxide synthase activity. Heme b serves as cofactor. Requires FAD as cofactor. It depends on FMN as a cofactor. The cofactor is (6R)-L-erythro-5,6,7,8-tetrahydrobiopterin. Post-translationally, ubiquitinated; mediated by STUB1/CHIP in the presence of Hsp70 and Hsp40 (in vitro). Isoform 1 is ubiquitously expressed: detected in skeletal muscle and brain, also in testis, lung and kidney, and at low levels in heart, adrenal gland and retina. Not detected in the platelets. Isoform 3 is expressed only in testis. Isoform 4 is detected in testis, skeletal muscle, lung, and kidney, at low levels in the brain, but not in the heart and adrenal gland.

It localises to the cell membrane. Its subcellular location is the sarcolemma. The protein localises to the cell projection. It is found in the dendritic spine. The catalysed reaction is 2 L-arginine + 3 NADPH + 4 O2 + H(+) = 2 L-citrulline + 2 nitric oxide + 3 NADP(+) + 4 H2O. Its activity is regulated as follows. Stimulated by calcium/calmodulin. Inhibited by DYNLL1 that prevents the dimerization of the protein. Inhibited by NOSIP. Functionally, produces nitric oxide (NO) which is a messenger molecule with diverse functions throughout the body. In the brain and peripheral nervous system, NO displays many properties of a neurotransmitter. Probably has nitrosylase activity and mediates cysteine S-nitrosylation of cytoplasmic target proteins such SRR. This Homo sapiens (Human) protein is Nitric oxide synthase 1.